Reading from the N-terminus, the 459-residue chain is ATP-dependent protease ATPase subunit HslU (459 aa).

Residues Val21, 63-68 (GVGKTE), Asp273, Glu338, and Arg410 contribute to the ATP site.

Belongs to the ClpX chaperone family. HslU subfamily. In terms of assembly, a double ring-shaped homohexamer of HslV is capped on each side by a ring-shaped HslU homohexamer. The assembly of the HslU/HslV complex is dependent on binding of ATP.

The protein resides in the cytoplasm. ATPase subunit of a proteasome-like degradation complex; this subunit has chaperone activity. The binding of ATP and its subsequent hydrolysis by HslU are essential for unfolding of protein substrates subsequently hydrolyzed by HslV. HslU recognizes the N-terminal part of its protein substrates and unfolds these before they are guided to HslV for hydrolysis. The chain is ATP-dependent protease ATPase subunit HslU from Thermosipho africanus (strain TCF52B).